Reading from the N-terminus, the 360-residue chain is Aminomethyltransferase (360 aa).

This sequence belongs to the GcvT family. In terms of assembly, the glycine cleavage system is composed of four proteins: P, T, L and H.

It carries out the reaction N(6)-[(R)-S(8)-aminomethyldihydrolipoyl]-L-lysyl-[protein] + (6S)-5,6,7,8-tetrahydrofolate = N(6)-[(R)-dihydrolipoyl]-L-lysyl-[protein] + (6R)-5,10-methylene-5,6,7,8-tetrahydrofolate + NH4(+). Its function is as follows. The glycine cleavage system catalyzes the degradation of glycine. This is Aminomethyltransferase from Legionella pneumophila subsp. pneumophila (strain Philadelphia 1 / ATCC 33152 / DSM 7513).